We begin with the raw amino-acid sequence, 243 residues long: GTP cyclohydrolase 1 type 2 (243 aa).

A divalent metal cation is bound by residues His-63, His-64, Asp-102, His-209, and Glu-213.

Belongs to the GTP cyclohydrolase I type 2/NIF3 family. As to quaternary structure, homohexamer.

It carries out the reaction GTP + H2O = 7,8-dihydroneopterin 3'-triphosphate + formate + H(+). It functions in the pathway cofactor biosynthesis; 7,8-dihydroneopterin triphosphate biosynthesis; 7,8-dihydroneopterin triphosphate from GTP: step 1/1. Functionally, converts GTP to dihydroneopterin triphosphate. Is not active with GDP, GMP, ATP, CTP or UTP as substrate. The chain is GTP cyclohydrolase 1 type 2 from Helicobacter pylori (strain ATCC 700392 / 26695) (Campylobacter pylori).